The primary structure comprises 120 residues: MARIAGVNIPNHQHAEIALTAIFGIGRTRAQKICDAAGVGRNVKMKDLSDSDMDRLRDEVGKFTVEGDLRREVTMNIKRLMDLGCYRGLRHRKGLPCRGQRTRTNARTRKGPRKAIAGKK.

Residues 96-120 (PCRGQRTRTNARTRKGPRKAIAGKK) are disordered.

The protein belongs to the universal ribosomal protein uS13 family. In terms of assembly, part of the 30S ribosomal subunit. Forms a loose heterodimer with protein S19. Forms two bridges to the 50S subunit in the 70S ribosome.

In terms of biological role, located at the top of the head of the 30S subunit, it contacts several helices of the 16S rRNA. In the 70S ribosome it contacts the 23S rRNA (bridge B1a) and protein L5 of the 50S subunit (bridge B1b), connecting the 2 subunits; these bridges are implicated in subunit movement. Contacts the tRNAs in the A and P-sites. This is Small ribosomal subunit protein uS13 from Dechloromonas aromatica (strain RCB).